Consider the following 196-residue polypeptide: Cell division protein SepF (196 aa).

Residues 15-80 (VEDDEEFNEP…PKRSASTFSK (66 aa)) are disordered. The segment covering 57-72 (PAQTTPKPQTQTAAPK) has biased composition (low complexity).

It belongs to the SepF family. As to quaternary structure, homodimer. Interacts with FtsZ.

It is found in the cytoplasm. Cell division protein that is part of the divisome complex and is recruited early to the Z-ring. Probably stimulates Z-ring formation, perhaps through the cross-linking of FtsZ protofilaments. Its function overlaps with FtsA. The chain is Cell division protein SepF from Lactococcus lactis subsp. cremoris (strain MG1363).